Consider the following 329-residue polypeptide: MPKLNSTFVTEFLFEGFSSFRRQHKLVFFVVFLTLYLLTLSGNVIIMTIIRLDHHLHTPMYFFLCMLSISETCYTVAIIPHMLSGLLNPHQPIATQSCATQLFFYLTFGINNCFLLTVMGYDRYVAICNPLRYSVIMGKRACIQLASGSLGIGLGMAIVQVTSVFGLPFCDAFVISHFFCDVRHLLKLACTDTTVNEIINFVVSVCVLVLPMGLVFISYVLIISTILKIASAEGQKKAFATCASHLTVVIIHYGCASIIYLKPKSQSSLGQDRLISVTYTHHSPTEPCCVQPEEQGGQRCSAQSRGAKNSVSLMKRGCEGFSFAFINMY.

Topologically, residues 1–26 are extracellular; that stretch reads MPKLNSTFVTEFLFEGFSSFRRQHKL. Asn-5 carries N-linked (GlcNAc...) asparagine glycosylation. A helical transmembrane segment spans residues 27–47; that stretch reads VFFVVFLTLYLLTLSGNVIIM. The Cytoplasmic portion of the chain corresponds to 48–55; it reads TIIRLDHH. Residues 56–76 form a helical membrane-spanning segment; the sequence is LHTPMYFFLCMLSISETCYTV. Residues 77–100 are Extracellular-facing; the sequence is AIIPHMLSGLLNPHQPIATQSCAT. Cys-98 and Cys-190 are joined by a disulfide. A helical transmembrane segment spans residues 101–121; that stretch reads QLFFYLTFGINNCFLLTVMGY. Residues 122 to 140 lie on the Cytoplasmic side of the membrane; the sequence is DRYVAICNPLRYSVIMGKR. Residues 141–161 form a helical membrane-spanning segment; sequence ACIQLASGSLGIGLGMAIVQV. Over 162–198 the chain is Extracellular; the sequence is TSVFGLPFCDAFVISHFFCDVRHLLKLACTDTTVNEI. A helical membrane pass occupies residues 199-218; that stretch reads INFVVSVCVLVLPMGLVFIS. Topologically, residues 219–238 are cytoplasmic; that stretch reads YVLIISTILKIASAEGQKKA. The helical transmembrane segment at 239–259 threads the bilayer; the sequence is FATCASHLTVVIIHYGCASII. Over 260 to 272 the chain is Extracellular; that stretch reads YLKPKSQSSLGQD. A helical transmembrane segment spans residues 273–293; that stretch reads RLISVTYTHHSPTEPCCVQPE. The Cytoplasmic portion of the chain corresponds to 294 to 329; the sequence is EQGGQRCSAQSRGAKNSVSLMKRGCEGFSFAFINMY.

Belongs to the G-protein coupled receptor 1 family.

Its subcellular location is the cell membrane. Functionally, odorant receptor. This chain is Olfactory receptor 10J3 (OR10J3), found in Homo sapiens (Human).